A 432-amino-acid chain; its full sequence is Glutamyl-tRNA reductase (432 aa).

Substrate contacts are provided by residues 55 to 58 (TCNR), Ser114, 119 to 121 (ETQ), and Gln125. Catalysis depends on Cys56, which acts as the Nucleophile. 194–199 (GAGEMI) is an NADP(+) binding site.

The protein belongs to the glutamyl-tRNA reductase family. As to quaternary structure, homodimer.

The enzyme catalyses (S)-4-amino-5-oxopentanoate + tRNA(Glu) + NADP(+) = L-glutamyl-tRNA(Glu) + NADPH + H(+). The protein operates within porphyrin-containing compound metabolism; protoporphyrin-IX biosynthesis; 5-aminolevulinate from L-glutamyl-tRNA(Glu): step 1/2. Functionally, catalyzes the NADPH-dependent reduction of glutamyl-tRNA(Glu) to glutamate 1-semialdehyde (GSA). The protein is Glutamyl-tRNA reductase of Burkholderia ambifaria (strain ATCC BAA-244 / DSM 16087 / CCUG 44356 / LMG 19182 / AMMD) (Burkholderia cepacia (strain AMMD)).